We begin with the raw amino-acid sequence, 130 residues long: MSMQDPLADMLTRIRNAQMAEKSVVSMPSSTLKVAVAKVLKDEGYIAGYEVNGEAKPQLSIELKYFEGRPVIEEVKRVSRPGLRQYKSVDDLPKVRGGLGVSIVSTNKGVMTDRAARAAGVGGEVLCTVF.

The protein belongs to the universal ribosomal protein uS8 family. Part of the 30S ribosomal subunit. Contacts proteins S5 and S12.

Functionally, one of the primary rRNA binding proteins, it binds directly to 16S rRNA central domain where it helps coordinate assembly of the platform of the 30S subunit. The sequence is that of Small ribosomal subunit protein uS8 from Ectopseudomonas mendocina (strain ymp) (Pseudomonas mendocina).